We begin with the raw amino-acid sequence, 100 residues long: Thioredoxin (100 aa).

The Thioredoxin domain maps to Met1–Lys100. The cysteines at positions 29 and 32 are disulfide-linked.

This sequence belongs to the thioredoxin family.

Its function is as follows. Participates in various redox reactions through the reversible oxidation of its active center dithiol to a disulfide and catalyzes dithiol-disulfide exchange reactions. The sequence is that of Thioredoxin (trxA) from Mycoplasmoides gallisepticum (strain R(low / passage 15 / clone 2)) (Mycoplasma gallisepticum).